A 199-amino-acid polypeptide reads, in one-letter code: MAFALLRPVGAHVLYPDVRLLSEDEENRSESDASDQSFGCCEGPEAARRGPGPGGGRRAGGGGGAGPVVVVRQRQAANARERDRTQSVNTAFTALRTLIPTEPVDRKLSKIETVRLASSYIAHLANVLLLGDSADDGQPCFRAAGSAKGAVPAAADGGRQPRSICTFCLSNQRKGGGRRDLGGSCLKVRGVAPLRGPRR.

The segment at 25–67 (EENRSESDASDQSFGCCEGPEAARRGPGPGGGRRAGGGGGAGP) is disordered. Residues 51-66 (PGPGGGRRAGGGGGAG) are compositionally biased toward gly residues. A bHLH domain is found at 72 to 124 (RQRQAANARERDRTQSVNTAFTALRTLIPTEPVDRKLSKIETVRLASSYIAHL).

As to quaternary structure, heterodimer; efficient DNA binding requires dimerization with another bHLH protein, such as TCF3/E12. Interacts with MEOX2.

Its subcellular location is the nucleus. Its function is as follows. Early transcription factor that plays a key role in somitogenesis, paraxial mesoderm development and regulation of stem cell pluripotency. Essential for the mesenchymal to epithelial transition associated with somite formation. Required for somite morphogenesis, thereby regulating patterning of the axial skeleton and skeletal muscles. Required for proper localization of somite epithelium markers during the mesenchymal to epithelial transition. Also plays a key role in regulation of stem cell pluripotency. Promotes pluripotency exit of embryonic stem cells (ESCs) by priming ESCs for differentiation. Acts as a key regulator of self-renewal of hematopoietic stem cells (HSCs) by mediating HSCs quiescence and long-term self-renewal. Together with MEOX2, regulates transcription in heart endothelial cells to regulate fatty acid transport across heart endothelial cells. Acts by forming a heterodimer with another helix-loop-helix (bHLH) protein, such as TCF3/E12, that binds DNA on E-box motifs (5'-CANNTG-3') and activates transcription of target genes. This chain is Transcription factor 15, found in Homo sapiens (Human).